A 257-amino-acid polypeptide reads, in one-letter code: UPF0246 protein Mmc1_3117 (257 aa).

It belongs to the UPF0246 family.

In Magnetococcus marinus (strain ATCC BAA-1437 / JCM 17883 / MC-1), this protein is UPF0246 protein Mmc1_3117.